Consider the following 254-residue polypeptide: Sugar fermentation stimulation protein homolog (254 aa).

The protein belongs to the SfsA family.

This is Sugar fermentation stimulation protein homolog from Synechococcus sp. (strain CC9605).